We begin with the raw amino-acid sequence, 262 residues long: Global transcriptional regulator CodY (262 aa).

Residues Met-1–Leu-159 form a GAF domain region. The H-T-H motif DNA-binding region spans Ala-207–Arg-226.

The protein belongs to the CodY family.

The protein localises to the cytoplasm. DNA-binding global transcriptional regulator which is involved in the adaptive response to starvation and acts by directly or indirectly controlling the expression of numerous genes in response to nutrient availability. During rapid exponential growth, CodY is highly active and represses genes whose products allow adaptation to nutrient depletion. This Streptococcus gordonii (strain Challis / ATCC 35105 / BCRC 15272 / CH1 / DL1 / V288) protein is Global transcriptional regulator CodY.